A 450-amino-acid chain; its full sequence is NADP-specific glutamate dehydrogenase (450 aa).

Lysine 111 is an active-site residue.

It belongs to the Glu/Leu/Phe/Val dehydrogenases family. As to quaternary structure, homohexamer.

It catalyses the reaction L-glutamate + NADP(+) + H2O = 2-oxoglutarate + NH4(+) + NADPH + H(+). The sequence is that of NADP-specific glutamate dehydrogenase (GDHA) from Laccaria bicolor (strain S238N-H82 / ATCC MYA-4686) (Bicoloured deceiver).